A 299-amino-acid chain; its full sequence is Aspartate carbamoyltransferase catalytic subunit (299 aa).

Residues Arg-51 and Thr-52 each contribute to the carbamoyl phosphate site. Lys-79 is an L-aspartate binding site. Carbamoyl phosphate-binding residues include Arg-101, His-130, and Gln-133. Residues Arg-163 and Arg-215 each contribute to the L-aspartate site. Carbamoyl phosphate is bound by residues Gly-256 and Pro-257.

It belongs to the aspartate/ornithine carbamoyltransferase superfamily. ATCase family. In terms of assembly, heterododecamer (2C3:3R2) of six catalytic PyrB chains organized as two trimers (C3), and six regulatory PyrI chains organized as three dimers (R2).

It carries out the reaction carbamoyl phosphate + L-aspartate = N-carbamoyl-L-aspartate + phosphate + H(+). It functions in the pathway pyrimidine metabolism; UMP biosynthesis via de novo pathway; (S)-dihydroorotate from bicarbonate: step 2/3. Its function is as follows. Catalyzes the condensation of carbamoyl phosphate and aspartate to form carbamoyl aspartate and inorganic phosphate, the committed step in the de novo pyrimidine nucleotide biosynthesis pathway. The chain is Aspartate carbamoyltransferase catalytic subunit from Ehrlichia chaffeensis (strain ATCC CRL-10679 / Arkansas).